Reading from the N-terminus, the 398-residue chain is S-adenosylmethionine synthase (398 aa).

ATP is bound at residue 136-141 (GTGSSD).

This sequence belongs to the AdoMet synthase 2 family. Mg(2+) is required as a cofactor.

The enzyme catalyses L-methionine + ATP + H2O = S-adenosyl-L-methionine + phosphate + diphosphate. It participates in amino-acid biosynthesis; S-adenosyl-L-methionine biosynthesis; S-adenosyl-L-methionine from L-methionine: step 1/1. Catalyzes the formation of S-adenosylmethionine from methionine and ATP. This chain is S-adenosylmethionine synthase, found in Methanosarcina barkeri (strain Fusaro / DSM 804).